Consider the following 354-residue polypeptide: Glycerol-1-phosphate dehydrogenase [NAD(P)+] (354 aa).

NAD(+)-binding positions include Gly-102–Asp-106 and Thr-124–Ser-127. Position 129 (Asp-129) interacts with substrate. Ser-133 contacts NAD(+). Residue Asp-176 participates in substrate binding. Positions 176 and 256 each coordinate Zn(2+). A substrate-binding site is contributed by His-260. Residue His-272 coordinates Zn(2+).

It belongs to the glycerol-1-phosphate dehydrogenase family. Zn(2+) is required as a cofactor.

Its subcellular location is the cytoplasm. It carries out the reaction sn-glycerol 1-phosphate + NAD(+) = dihydroxyacetone phosphate + NADH + H(+). The enzyme catalyses sn-glycerol 1-phosphate + NADP(+) = dihydroxyacetone phosphate + NADPH + H(+). It functions in the pathway membrane lipid metabolism; glycerophospholipid metabolism. Catalyzes the NAD(P)H-dependent reduction of dihydroxyacetonephosphate (DHAP or glycerone phosphate) to glycerol 1-phosphate (G1P). The G1P thus generated is used as the glycerophosphate backbone of phospholipids in the cellular membranes of Archaea. This Methanothrix thermoacetophila (strain DSM 6194 / JCM 14653 / NBRC 101360 / PT) (Methanosaeta thermophila) protein is Glycerol-1-phosphate dehydrogenase [NAD(P)+].